The following is a 262-amino-acid chain: Acyl-[acyl-carrier-protein]--UDP-N-acetylglucosamine O-acyltransferase (262 aa).

It belongs to the transferase hexapeptide repeat family. LpxA subfamily. Homotrimer.

Its subcellular location is the cytoplasm. The catalysed reaction is a (3R)-hydroxyacyl-[ACP] + UDP-N-acetyl-alpha-D-glucosamine = a UDP-3-O-[(3R)-3-hydroxyacyl]-N-acetyl-alpha-D-glucosamine + holo-[ACP]. It participates in glycolipid biosynthesis; lipid IV(A) biosynthesis; lipid IV(A) from (3R)-3-hydroxytetradecanoyl-[acyl-carrier-protein] and UDP-N-acetyl-alpha-D-glucosamine: step 1/6. Functionally, involved in the biosynthesis of lipid A, a phosphorylated glycolipid that anchors the lipopolysaccharide to the outer membrane of the cell. The protein is Acyl-[acyl-carrier-protein]--UDP-N-acetylglucosamine O-acyltransferase of Pasteurella multocida (strain Pm70).